Reading from the N-terminus, the 144-residue chain is Cytochrome c oxidase subunit 4 isoform 1, mitochondrial (144 aa).

Over 1–73 (SVVKSEDFTL…SFAEMNRRSN (73 aa)) the chain is Mitochondrial matrix. Residue K4 is modified to N6-acetyllysine; alternate. K4 is modified (N6-succinyllysine; alternate). At K28 the chain carries N6-acetyllysine. S31 and S33 each carry phosphoserine. K35 carries the N6-acetyllysine; alternate modification. Position 35 is an N6-succinyllysine; alternate (K35). K42 bears the N6-acetyllysine mark. A helical membrane pass occupies residues 74–99 (EWKTVVGTAMFFFGITALIVMWEKRY). The Mitochondrial intermembrane segment spans residues 100-144 (VYGPLPQTFDKEWVAMQTKRMLDMKVNPIQGLASKWDYEKNEWKK).

The protein belongs to the cytochrome c oxidase IV family. Component of the cytochrome c oxidase (complex IV, CIV), a multisubunit enzyme composed of 14 subunits. The complex is composed of a catalytic core of 3 subunits MT-CO1, MT-CO2 and MT-CO3, encoded in the mitochondrial DNA, and 11 supernumerary subunits COX4I, COX5A, COX5B, COX6A, COX6B, COX6C, COX7A, COX7B, COX7C, COX8 and NDUFA4, which are encoded in the nuclear genome. The complex exists as a monomer or a dimer and forms supercomplexes (SCs) in the inner mitochondrial membrane with NADH-ubiquinone oxidoreductase (complex I, CI) and ubiquinol-cytochrome c oxidoreductase (cytochrome b-c1 complex, complex III, CIII), resulting in different assemblies (supercomplex SCI(1)III(2)IV(1) and megacomplex MCI(2)III(2)IV(2)). Interacts with PHB2; the interaction decreases in absence of SPHK2. Interacts with AFG1L. Interacts with ABCB7; this interaction allows the regulation of cellular iron homeostasis and cellular reactive oxygen species (ROS) levels in cardiomyocytes. Interacts with FLVCR2; this interaction occurs in the absence of heme and is disrupted upon heme binding. Interacts with IRGC.

It localises to the mitochondrion inner membrane. It functions in the pathway energy metabolism; oxidative phosphorylation. Component of the cytochrome c oxidase, the last enzyme in the mitochondrial electron transport chain which drives oxidative phosphorylation. The respiratory chain contains 3 multisubunit complexes succinate dehydrogenase (complex II, CII), ubiquinol-cytochrome c oxidoreductase (cytochrome b-c1 complex, complex III, CIII) and cytochrome c oxidase (complex IV, CIV), that cooperate to transfer electrons derived from NADH and succinate to molecular oxygen, creating an electrochemical gradient over the inner membrane that drives transmembrane transport and the ATP synthase. Cytochrome c oxidase is the component of the respiratory chain that catalyzes the reduction of oxygen to water. Electrons originating from reduced cytochrome c in the intermembrane space (IMS) are transferred via the dinuclear copper A center (CU(A)) of subunit 2 and heme A of subunit 1 to the active site in subunit 1, a binuclear center (BNC) formed by heme A3 and copper B (CU(B)). The BNC reduces molecular oxygen to 2 water molecules using 4 electrons from cytochrome c in the IMS and 4 protons from the mitochondrial matrix. The protein is Cytochrome c oxidase subunit 4 isoform 1, mitochondrial (COX4I1) of Theropithecus gelada (Gelada baboon).